Here is a 592-residue protein sequence, read N- to C-terminus: A-type ATP synthase subunit A (592 aa).

ATP is bound at residue 233-240 (GPFGSGKT).

It belongs to the ATPase alpha/beta chains family. Has multiple subunits with at least A(3), B(3), C, D, E, F, H, I and proteolipid K(x).

The protein resides in the cell membrane. It catalyses the reaction ATP + H2O + 4 H(+)(in) = ADP + phosphate + 5 H(+)(out). Functionally, component of the A-type ATP synthase that produces ATP from ADP in the presence of a proton gradient across the membrane. The A chain is the catalytic subunit. In Saccharolobus solfataricus (strain ATCC 35092 / DSM 1617 / JCM 11322 / P2) (Sulfolobus solfataricus), this protein is A-type ATP synthase subunit A.